Reading from the N-terminus, the 584-residue chain is Proteasome-associated ATPase (584 aa).

The stretch at 8–90 (RHAERDRDEL…KEEVDRLSQP (83 aa)) forms a coiled coil. Residue 272 to 277 (GCGKTL) participates in ATP binding. Positions 583–584 (YL) are docks into pockets in the proteasome alpha-ring.

It belongs to the AAA ATPase family. As to quaternary structure, homohexamer. Assembles into a hexameric ring structure that caps the 20S proteasome core. Strongly interacts with the prokaryotic ubiquitin-like protein Pup through a hydrophobic interface; the interacting region of ARC lies in its N-terminal coiled-coil domain. There is one Pup binding site per ARC hexamer ring. Upon ATP-binding, the C-terminus of ARC interacts with the alpha-rings of the proteasome core, possibly by binding to the intersubunit pockets.

Its pathway is protein degradation; proteasomal Pup-dependent pathway. Functionally, ATPase which is responsible for recognizing, binding, unfolding and translocation of pupylated proteins into the bacterial 20S proteasome core particle. May be essential for opening the gate of the 20S proteasome via an interaction with its C-terminus, thereby allowing substrate entry and access to the site of proteolysis. Thus, the C-termini of the proteasomal ATPase may function like a 'key in a lock' to induce gate opening and therefore regulate proteolysis. The sequence is that of Proteasome-associated ATPase from Thermobifida fusca (strain YX).